The following is a 273-amino-acid chain: Shikimate dehydrogenase (NADP(+)) (273 aa).

Residues 14–16 and Thr-61 contribute to the shikimate site; that span reads SKS. The active-site Proton acceptor is the Lys-65. Asp-77 is a binding site for NADP(+). Asn-86 and Asp-102 together coordinate shikimate. Residues 127–131, 151–156, and Met-215 each bind NADP(+); these read GAGGA and NRTGAR. Tyr-217 contributes to the shikimate binding site. An NADP(+)-binding site is contributed by Gly-239.

This sequence belongs to the shikimate dehydrogenase family. Homodimer.

The catalysed reaction is shikimate + NADP(+) = 3-dehydroshikimate + NADPH + H(+). It participates in metabolic intermediate biosynthesis; chorismate biosynthesis; chorismate from D-erythrose 4-phosphate and phosphoenolpyruvate: step 4/7. Its function is as follows. Involved in the biosynthesis of the chorismate, which leads to the biosynthesis of aromatic amino acids. Catalyzes the reversible NADPH linked reduction of 3-dehydroshikimate (DHSA) to yield shikimate (SA). The polypeptide is Shikimate dehydrogenase (NADP(+)) (Thioalkalivibrio sulfidiphilus (strain HL-EbGR7)).